The primary structure comprises 594 residues: Spermidine/putrescine import ATP-binding protein PotA (594 aa).

The region spanning 24–435 (IEIKKINKTY…PANNWVANFI (412 aa)) is the ABC transporter domain. An ATP-binding site is contributed by 57–64 (GPSGCGKT). The tract at residues 125–304 (RKPIENVSAD…EWFDKKKLTR (180 aa)) is insert.

This sequence belongs to the ABC transporter superfamily. Spermidine/putrescine importer (TC 3.A.1.11.1) family. In terms of assembly, the complex is composed of two ATP-binding proteins (PotA), two transmembrane proteins (PotB and PotC) and a solute-binding protein (PotD).

It localises to the cell membrane. The enzyme catalyses ATP + H2O + polyamine-[polyamine-binding protein]Side 1 = ADP + phosphate + polyamineSide 2 + [polyamine-binding protein]Side 1.. In terms of biological role, part of the ABC transporter complex PotABCD involved in spermidine/putrescine import. Responsible for energy coupling to the transport system. This chain is Spermidine/putrescine import ATP-binding protein PotA, found in Malacoplasma penetrans (strain HF-2) (Mycoplasma penetrans).